Here is a 512-residue protein sequence, read N- to C-terminus: Cytochrome P450 71BT1 (512 aa).

The N-terminal stretch at 1–24 (MENLFIFLFALLLFCFMLLKLSKK) is a signal peptide. Residues Asn-111 and Asn-168 are each glycosylated (N-linked (GlcNAc...) asparagine). Cys-447 contributes to the heme binding site.

This sequence belongs to the cytochrome P450 family.

This Catharanthus roseus (Madagascar periwinkle) protein is Cytochrome P450 71BT1.